The primary structure comprises 1070 residues: Carbamoyl phosphate synthase large chain (1070 aa).

The segment at 1-401 (MPKRDDIKTI…ALLKAVRSLE (401 aa)) is carboxyphosphate synthetic domain. Positions 129, 169, 175, 176, 208, 210, 215, 241, 242, 243, 284, and 298 each coordinate ATP. One can recognise an ATP-grasp 1 domain in the interval 133-327 (RDLMNELGEP…IAKLAAKIAV (195 aa)). The Mg(2+) site is built by Q284, E298, and N300. Residues Q284, E298, and N300 each contribute to the Mn(2+) site. The interval 402-546 (IGADHLLLEE…YSTYEEENES (145 aa)) is oligomerization domain. The tract at residues 547-929 (TRSAKESVIV…ALYKGFVASG (383 aa)) is carbamoyl phosphate synthetic domain. Residues 671-861 (EKALEILQIP…MANVATRVIL (191 aa)) enclose the ATP-grasp 2 domain. Residues R707, R746, V748, E752, G777, V778, H779, S780, Q820, and E832 each coordinate ATP. Residues Q820, E832, and N834 each coordinate Mg(2+). Positions 820, 832, and 834 each coordinate Mn(2+). Positions 930–1070 (TTMHDYGTVL…SEVKQPKARV (141 aa)) constitute an MGS-like domain. Positions 930-1070 (TTMHDYGTVL…SEVKQPKARV (141 aa)) are allosteric domain.

Belongs to the CarB family. As to quaternary structure, composed of two chains; the small (or glutamine) chain promotes the hydrolysis of glutamine to ammonia, which is used by the large (or ammonia) chain to synthesize carbamoyl phosphate. Tetramer of heterodimers (alpha,beta)4. It depends on Mg(2+) as a cofactor. Mn(2+) is required as a cofactor.

The enzyme catalyses hydrogencarbonate + L-glutamine + 2 ATP + H2O = carbamoyl phosphate + L-glutamate + 2 ADP + phosphate + 2 H(+). It carries out the reaction hydrogencarbonate + NH4(+) + 2 ATP = carbamoyl phosphate + 2 ADP + phosphate + 2 H(+). It functions in the pathway amino-acid biosynthesis; L-arginine biosynthesis; carbamoyl phosphate from bicarbonate: step 1/1. The protein operates within pyrimidine metabolism; UMP biosynthesis via de novo pathway; (S)-dihydroorotate from bicarbonate: step 1/3. Its function is as follows. Large subunit of the glutamine-dependent carbamoyl phosphate synthetase (CPSase). CPSase catalyzes the formation of carbamoyl phosphate from the ammonia moiety of glutamine, carbonate, and phosphate donated by ATP, constituting the first step of 2 biosynthetic pathways, one leading to arginine and/or urea and the other to pyrimidine nucleotides. The large subunit (synthetase) binds the substrates ammonia (free or transferred from glutamine from the small subunit), hydrogencarbonate and ATP and carries out an ATP-coupled ligase reaction, activating hydrogencarbonate by forming carboxy phosphate which reacts with ammonia to form carbamoyl phosphate. The sequence is that of Carbamoyl phosphate synthase large chain from Listeria monocytogenes serotype 4a (strain HCC23).